Here is a 451-residue protein sequence, read N- to C-terminus: Exodeoxyribonuclease 7 large subunit (451 aa).

Belongs to the XseA family. As to quaternary structure, heterooligomer composed of large and small subunits.

The protein localises to the cytoplasm. The enzyme catalyses Exonucleolytic cleavage in either 5'- to 3'- or 3'- to 5'-direction to yield nucleoside 5'-phosphates.. In terms of biological role, bidirectionally degrades single-stranded DNA into large acid-insoluble oligonucleotides, which are then degraded further into small acid-soluble oligonucleotides. The chain is Exodeoxyribonuclease 7 large subunit from Bacillus cytotoxicus (strain DSM 22905 / CIP 110041 / 391-98 / NVH 391-98).